The sequence spans 172 residues: Small ribosomal subunit protein uS5 (172 aa).

An S5 DRBM domain is found at 17 to 80 (MREKMIAVNR…EECRRNLVKV (64 aa)).

Belongs to the universal ribosomal protein uS5 family. As to quaternary structure, part of the 30S ribosomal subunit. Contacts proteins S4 and S8.

In terms of biological role, with S4 and S12 plays an important role in translational accuracy. Located at the back of the 30S subunit body where it stabilizes the conformation of the head with respect to the body. The chain is Small ribosomal subunit protein uS5 from Paracidovorax citrulli (strain AAC00-1) (Acidovorax citrulli).